The sequence spans 375 residues: uncharacterized protein (375 aa).

The Cytoplasmic portion of the chain corresponds to 1–2; that stretch reads MR. A helical; Signal-anchor for type II membrane protein transmembrane segment spans residues 3–23; sequence WYSYVIPAVILSIIAISGVWW. The Lumenal segment spans residues 24 to 375; that stretch reads NATLGTRLDQ…YIEQRLFPQP (352 aa).

The protein belongs to the glycosyltransferase 34 family.

It is found in the endoplasmic reticulum membrane. Its subcellular location is the golgi apparatus membrane. This is an uncharacterized protein from Schizosaccharomyces pombe (strain 972 / ATCC 24843) (Fission yeast).